The primary structure comprises 144 residues: 3-dehydroquinate dehydratase (144 aa).

Tyrosine 22 acts as the Proton acceptor in catalysis. Positions 73, 79, and 86 each coordinate substrate. Histidine 99 functions as the Proton donor in the catalytic mechanism. Substrate is bound by residues leucine 100–serine 101 and arginine 110.

This sequence belongs to the type-II 3-dehydroquinase family. In terms of assembly, homododecamer.

The catalysed reaction is 3-dehydroquinate = 3-dehydroshikimate + H2O. Its pathway is metabolic intermediate biosynthesis; chorismate biosynthesis; chorismate from D-erythrose 4-phosphate and phosphoenolpyruvate: step 3/7. Its function is as follows. Catalyzes a trans-dehydration via an enolate intermediate. This Pelotomaculum thermopropionicum (strain DSM 13744 / JCM 10971 / SI) protein is 3-dehydroquinate dehydratase.